The primary structure comprises 228 residues: RNA chaperone ProQ (228 aa).

Residues 107–178 (KARVQAQRAE…REEKHTPVSD (72 aa)) form a disordered region. Composition is skewed to basic and acidic residues over residues 117 to 136 (QQAK…DAPR) and 146 to 175 (RRKE…KHTP).

It belongs to the ProQ family.

The protein localises to the cytoplasm. In terms of biological role, RNA chaperone with significant RNA binding, RNA strand exchange and RNA duplexing activities. May regulate ProP activity through an RNA-based, post-transcriptional mechanism. This Salmonella agona (strain SL483) protein is RNA chaperone ProQ.